A 90-amino-acid polypeptide reads, in one-letter code: Small ribosomal subunit protein bS16 (90 aa).

It belongs to the bacterial ribosomal protein bS16 family.

The chain is Small ribosomal subunit protein bS16 from Lysinibacillus sphaericus (strain C3-41).